The following is a 757-amino-acid chain: uncharacterized protein (757 aa).

The S1 motif domain occupies 640 to 709 (GMILEGVVSN…ARKRIALTMR (70 aa)). Residues 710–741 (LDDEPGGAKHKMPSENRSRERTAGRKPQRNDR) are compositionally biased toward basic and acidic residues. The disordered stretch occupies residues 710–757 (LDDEPGGAKHKMPSENRSRERTAGRKPQRNDRAPANSAMADAFAKLKR).

This is an uncharacterized protein from Neisseria meningitidis serogroup A / serotype 4A (strain DSM 15465 / Z2491).